Reading from the N-terminus, the 492-residue chain is GlcNAc-binding protein A (492 aa).

An N-terminal signal peptide occupies residues 1–23 (MNKSSTKTLIALSMMAVSSGVSA). The region spanning 24 to 204 (HGYVSETNDG…AFYNVIDVKF (181 aa)) is the Chitin-binding type-4 domain. Residues 443–484 (AGTKVLAEDGNVYQCKEFPYSGYCVQWTETATNFAPGVGSDW) form the Chitin-binding type-3 domain.

The protein belongs to the GbpA family.

The protein resides in the secreted. Its function is as follows. Probably interacts with GlcNAc residues. May promote attachment to both epithelial cell surfaces and chitin. The protein is GlcNAc-binding protein A of Aliivibrio fischeri (strain ATCC 700601 / ES114) (Vibrio fischeri).